Here is a 597-residue protein sequence, read N- to C-terminus: Uptake hydrogenase large subunit (597 aa).

Positions 75, 78, 576, and 579 each coordinate Ni(2+).

The protein belongs to the [NiFe]/[NiFeSe] hydrogenase large subunit family. Heterodimer of a large and a small subunit. Ni(2+) is required as a cofactor.

The protein localises to the cell membrane. It catalyses the reaction H2 + A = AH2. In terms of biological role, this enzyme recycles the H(2) produced by nitrogenase to increase the production of ATP and to protect nitrogenase against inhibition or damage by O(2) under carbon- or phosphate-limited conditions. The polypeptide is Uptake hydrogenase large subunit (hupB) (Rhodobacter capsulatus (Rhodopseudomonas capsulata)).